Here is a 427-residue protein sequence, read N- to C-terminus: Trigger factor (427 aa).

A PPIase FKBP-type domain is found at 163-248 (GDTVILDFEG…LHEIKTKEVP (86 aa)).

It belongs to the FKBP-type PPIase family. Tig subfamily.

It is found in the cytoplasm. The catalysed reaction is [protein]-peptidylproline (omega=180) = [protein]-peptidylproline (omega=0). In terms of biological role, involved in protein export. Acts as a chaperone by maintaining the newly synthesized protein in an open conformation. Functions as a peptidyl-prolyl cis-trans isomerase. This is Trigger factor from Listeria welshimeri serovar 6b (strain ATCC 35897 / DSM 20650 / CCUG 15529 / CIP 8149 / NCTC 11857 / SLCC 5334 / V8).